Reading from the N-terminus, the 311-residue chain is Methionyl-tRNA formyltransferase (311 aa).

109 to 112 (SLLP) provides a ligand contact to (6S)-5,6,7,8-tetrahydrofolate.

The protein belongs to the Fmt family.

It carries out the reaction L-methionyl-tRNA(fMet) + (6R)-10-formyltetrahydrofolate = N-formyl-L-methionyl-tRNA(fMet) + (6S)-5,6,7,8-tetrahydrofolate + H(+). Functionally, attaches a formyl group to the free amino group of methionyl-tRNA(fMet). The formyl group appears to play a dual role in the initiator identity of N-formylmethionyl-tRNA by promoting its recognition by IF2 and preventing the misappropriation of this tRNA by the elongation apparatus. This chain is Methionyl-tRNA formyltransferase, found in Marinobacter nauticus (strain ATCC 700491 / DSM 11845 / VT8) (Marinobacter aquaeolei).